Reading from the N-terminus, the 214-residue chain is Alkaline phosphatase-like protein (214 aa).

Transmembrane regions (helical) follow at residues 3-23 (EIII…LIMI), 48-68 (LGII…ALIL), 141-161 (FLIL…SLGA), and 177-197 (YSSV…LLFV).

Belongs to the DedA family.

It is found in the cell membrane. In Lactococcus lactis subsp. cremoris (strain MG1363), this protein is Alkaline phosphatase-like protein (apl).